A 264-amino-acid chain; its full sequence is 3-methyl-2-oxobutanoate hydroxymethyltransferase 2 (264 aa).

Mg(2+) is bound by residues Asp-44 and Asp-83. 3-methyl-2-oxobutanoate contacts are provided by residues 44 to 45, Asp-83, and Lys-111; that span reads DS. Residue Glu-113 participates in Mg(2+) binding. The active-site Proton acceptor is Glu-180.

It belongs to the PanB family. As to quaternary structure, homodecamer; pentamer of dimers. It depends on Mg(2+) as a cofactor.

It localises to the cytoplasm. It carries out the reaction 3-methyl-2-oxobutanoate + (6R)-5,10-methylene-5,6,7,8-tetrahydrofolate + H2O = 2-dehydropantoate + (6S)-5,6,7,8-tetrahydrofolate. The protein operates within cofactor biosynthesis; (R)-pantothenate biosynthesis; (R)-pantoate from 3-methyl-2-oxobutanoate: step 1/2. In terms of biological role, catalyzes the reversible reaction in which hydroxymethyl group from 5,10-methylenetetrahydrofolate is transferred onto alpha-ketoisovalerate to form ketopantoate. This Hahella chejuensis (strain KCTC 2396) protein is 3-methyl-2-oxobutanoate hydroxymethyltransferase 2.